We begin with the raw amino-acid sequence, 176 residues long: Large ribosomal subunit protein uL10 (176 aa).

The protein belongs to the universal ribosomal protein uL10 family. As to quaternary structure, part of the ribosomal stalk of the 50S ribosomal subunit. The N-terminus interacts with L11 and the large rRNA to form the base of the stalk. The C-terminus forms an elongated spine to which L12 dimers bind in a sequential fashion forming a multimeric L10(L12)X complex.

Functionally, forms part of the ribosomal stalk, playing a central role in the interaction of the ribosome with GTP-bound translation factors. This is Large ribosomal subunit protein uL10 from Coprothermobacter proteolyticus (strain ATCC 35245 / DSM 5265 / OCM 4 / BT).